A 606-amino-acid chain; its full sequence is Probable glutamine--fructose-6-phosphate aminotransferase [isomerizing] (606 aa).

Cysteine 2 (for GATase activity) is an active-site residue. The Glutamine amidotransferase type-2 domain occupies 2–224; the sequence is CGISACLNHT…DNDYGYITNN (223 aa). SIS domains lie at 282-427 and 458-596; these read FFPE…SLDN and LLEF…PDYP.

The catalysed reaction is D-fructose 6-phosphate + L-glutamine = D-glucosamine 6-phosphate + L-glutamate. Its pathway is nucleotide-sugar biosynthesis; UDP-N-acetyl-alpha-D-glucosamine biosynthesis; alpha-D-glucosamine 6-phosphate from D-fructose 6-phosphate: step 1/1. Functionally, controls the flux of glucose into the hexosamine pathway. Most likely involved in regulating the availability of precursors for glycosylation of proteins (Potential). This Acanthamoeba polyphaga (Amoeba) protein is Probable glutamine--fructose-6-phosphate aminotransferase [isomerizing].